The chain runs to 420 residues: Exodeoxyribonuclease 7 large subunit (420 aa).

It belongs to the XseA family. In terms of assembly, heterooligomer composed of large and small subunits.

It localises to the cytoplasm. It catalyses the reaction Exonucleolytic cleavage in either 5'- to 3'- or 3'- to 5'-direction to yield nucleoside 5'-phosphates.. Functionally, bidirectionally degrades single-stranded DNA into large acid-insoluble oligonucleotides, which are then degraded further into small acid-soluble oligonucleotides. The protein is Exodeoxyribonuclease 7 large subunit of Helicobacter pylori (strain G27).